Consider the following 427-residue polypeptide: MTASGRTNPYSIVSSEEDGLHLVTMSGANGFGNGKVHTRRRCRNRFVKKNGQCNIEFANMDEKSQRYLADMFTTCVDIRWRYMLLIFSLAFLASWLLFGVIFWVIAVAHGDLEPAEAHGRTPCVLQVHGFMAAFLFSIETQTTIGYGLRCVTEECPVAVFMVVAQSIVGCIIDSFMIGAIMAKMARPKKRAQTLLFSHNAVVALRDGKLCLMWRVGNLRKSHIVEAHVRAQLIKPRVTEEGEYIPLDQIDIDVGFDKGLDRIFLVSPITILHEIDEASPLFGISRQDLETDDFEIVVILEGMVEATAMTTQARSSYLANEILWGHRFEPVLFEEKNQYKIDYSHFHKTYEVPSTPRCSAKDLVENKFLLPSTNSFCYENELAFLSRDEEDEVDGEQDSLGPQARRDFDRPQAGTALEQRPYRRESEI.

Residues 1–77 (MTASGRTNPY…LADMFTTCVD (77 aa)) lie on the Cytoplasmic side of the membrane. S-nitrosocysteine is present on Cys75. Residues 78–104 (IRWRYMLLIFSLAFLASWLLFGVIFWV) traverse the membrane as a helical segment. A 1,2-diacyl-sn-glycero-3-phospho-(1D-myo-inositol-4,5-bisphosphate) is bound by residues Arg79 and Arg81. The Extracellular segment spans residues 105–129 (IAVAHGDLEPAEAHGRTPCVLQVHG). The cysteines at positions 123 and 155 are disulfide-linked. The segment at residues 130–146 (FMAAFLFSIETQTTIGY) is an intramembrane region (helical; Pore-forming). Thr143, Ile144, Gly145, and Tyr146 together coordinate K(+). The Selectivity filter motif lies at 143-148 (TIGYGL). Residues 147-155 (GLRCVTEEC) are Extracellular-facing. Residues 156 to 183 (PVAVFMVVAQSIVGCIIDSFMIGAIMAK) traverse the membrane as a helical segment. A 1,2-diacyl-sn-glycero-3-phospho-(1D-myo-inositol-4,5-bisphosphate) is bound by residues Lys183 and Lys188. Over 184-427 (MARPKKRAQT…QRPYRRESEI (244 aa)) the chain is Cytoplasmic. Positions 387–396 (DEEDEVDGEQ) are enriched in acidic residues. The segment at 387-427 (DEEDEVDGEQDSLGPQARRDFDRPQAGTALEQRPYRRESEI) is disordered. The PDZ-binding signature appears at 425–427 (SEI).

It belongs to the inward rectifier-type potassium channel (TC 1.A.2.1) family. KCNJ12 subfamily. As to quaternary structure, homotetramer. Forms heteromer with KCNJ4. Association, via its PDZ-recognition domain, with LIN7A, LIN7B, LIN7C, DLG1, CASK and APBA1 plays a key role in its localization and trafficking.

Its subcellular location is the membrane. The catalysed reaction is K(+)(in) = K(+)(out). Its activity is regulated as follows. Activated by phosphatidylinositol 4,5-biphosphate (PtdIns(4,5)P2). PtdIns(4,5)P2 binding to the cytoplasmic side of the channel triggers a conformation change leading to channel opening. In terms of biological role, inward rectifying potassium channel that probably participates in controlling the resting membrane potential in electrically excitable cells. Probably participates in establishing action potential waveform and excitability of neuronal and muscle tissues. Inward rectifier potassium channels are characterized by a greater tendency to allow potassium to flow into the cell rather than out of it. Their voltage dependence is regulated by the concentration of extracellular potassium; as external potassium is raised, the voltage range of the channel opening shifts to more positive voltages. The inward rectification is mainly due to the blockage of outward current by internal magnesium. The protein is ATP-sensitive inward rectifier potassium channel 12 (KCNJ12) of Bos taurus (Bovine).